A 229-amino-acid chain; its full sequence is Uracil-DNA glycosylase (229 aa).

The active-site Proton acceptor is Asp65.

This sequence belongs to the uracil-DNA glycosylase (UDG) superfamily. UNG family.

The protein localises to the cytoplasm. The enzyme catalyses Hydrolyzes single-stranded DNA or mismatched double-stranded DNA and polynucleotides, releasing free uracil.. Excises uracil residues from the DNA which can arise as a result of misincorporation of dUMP residues by DNA polymerase or due to deamination of cytosine. The protein is Uracil-DNA glycosylase of Limosilactobacillus reuteri (strain DSM 20016) (Lactobacillus reuteri).